The chain runs to 590 residues: Shugoshin (590 aa).

Residues 1–20 (MPKRKIAPNKESSRRTVSHD) form a disordered region. The segment covering 11–20 (ESSRRTVSHD) has biased composition (basic and acidic residues). Residues 25-86 (QIQEFQNLMD…QENVTLRSKT (62 aa)) adopt a coiled-coil conformation. Disordered stretches follow at residues 133-235 (LRTM…QVEE), 291-337 (PSNP…HSMK), and 411-550 (RNRE…NSNI). The segment covering 173-185 (SFNKDDGPDLEPK) has biased composition (basic and acidic residues). The span at 302–326 (PSATLPTTTSDASTVYPSSSSSTNS) shows a compositional bias: low complexity. A compositionally biased stretch (basic residues) spans 328–337 (PKTKIKHSMK). Basic and acidic residues predominate over residues 448-459 (KKTEDEIHEDTA). The span at 513–526 (IVNNLSDENSTTRP) shows a compositional bias: polar residues. Over residues 527 to 550 (SKSSKGTSNNNNNYNNFDNNNSNI) the composition is skewed to low complexity.

Belongs to the shugoshin family. Ubiquitinated by the anaphase promoting complex (APC) at the onset of anaphase, conducting to its degradation.

Its subcellular location is the chromosome. It is found in the centromere. It localises to the kinetochore. The protein resides in the cytoplasm. The protein localises to the cytoskeleton. Its subcellular location is the spindle pole. Its function is as follows. Plays a central role in chromosome cohesion during mitosis and meiosis divisions by preventing premature dissociation of cohesin complex from centromeres after prophase, when most of cohesin complex dissociates from chromosomes arms. Probably act by protecting REC8 and RAD21 from separase degradation during anaphase. Also acts as a spindle checkpoint component required for sensing tension between sister chromatids during mitosis, its degradation when they separate preventing cell cycle arrest and chromosome loss in anaphase, a time when sister chromatids are no longer under tension. This chain is Shugoshin (SGO1), found in Saccharomyces cerevisiae (strain ATCC 204508 / S288c) (Baker's yeast).